An 851-amino-acid chain; its full sequence is Glutathione transporter 1 (851 aa).

The segment covering 1–14 has biased composition (polar residues); the sequence is MTARNSASIPTSIR. Positions 1 to 116 are disordered; sequence MTARNSASIP…LDNETDSEVE (116 aa). Asn-32 is a glycosylation site (N-linked (GlcNAc...) asparagine). Positions 33-68 are enriched in low complexity; sequence LSTKTASKTSLTFRQSSSDESTSSYSGNHHNINIQH. Polar residues predominate over residues 74-92; it reads FRTNSSSFSPNDYSISESP. A glycan (N-linked (GlcNAc...) asparagine) is linked at Asn-77. Ser-93 carries the post-translational modification Phosphoserine. A coiled-coil region spans residues 105-134; sequence VQLDNETDSEVESEVEELERELEAIEDSVY. An N-linked (GlcNAc...) asparagine glycan is attached at Asn-109. Transmembrane regions (helical) follow at residues 156 to 176 and 179 to 199; these read TWVL…FFSL and PALS…GKLL. Asn-256 is a glycosylation site (N-linked (GlcNAc...) asparagine). Helical transmembrane passes span 259-279, 282-302, 333-353, and 405-425; these read WGYK…FAGL, RWIV…TVLF, FFAY…FIFK, and WVIC…VPIL. 2 N-linked (GlcNAc...) asparagine glycosylation sites follow: Asn-452 and Asn-464. Helical transmembrane passes span 480 to 500, 531 to 551, 560 to 580, 592 to 612, and 642 to 662; these read YSMS…HCAL, APQW…IFTV, VWAL…QGVL, IITE…NLMI, and ILFF…VAVQ. Residue Asn-691 is glycosylated (N-linked (GlcNAc...) asparagine). The next 3 membrane-spanning stretches (helical) occupy residues 711-731, 757-777, and 791-811; these read YYPL…TWGL, PATG…NYVI, and VLAA…FLCV. A glycan (N-linked (GlcNAc...) asparagine) is linked at Asn-843.

This sequence belongs to the oligopeptide OPT transporter family.

Its subcellular location is the endoplasmic reticulum membrane. It is found in the cell membrane. In terms of biological role, high-affinity glutathione transporter which plays a role in scavenging glutathione from the extracellular environment for the maintenance of sulfur homeostasis. The chain is Glutathione transporter 1 (pgt1) from Schizosaccharomyces pombe (strain 972 / ATCC 24843) (Fission yeast).